A 177-amino-acid polypeptide reads, in one-letter code: dCTP deaminase, dUMP-forming (177 aa).

DCTP-binding positions include 98 to 103 (RSSVGR), Asn110, 115 to 118 (DPGF), 123 to 125 (TLE), Gln144, 157 to 160 (YQGK), and Gln164. Residue Glu125 is the Proton donor/acceptor of the active site.

This sequence belongs to the dCTP deaminase family. Homotrimer. Mg(2+) is required as a cofactor.

The catalysed reaction is dCTP + 2 H2O = dUMP + NH4(+) + diphosphate. The protein operates within pyrimidine metabolism; dUMP biosynthesis; dUMP from dCTP: step 1/1. With respect to regulation, inhibited by dTTP. In terms of biological role, bifunctional enzyme that catalyzes both the deamination of dCTP to dUTP and the hydrolysis of dUTP to dUMP without releasing the toxic dUTP intermediate. This Halalkalibacterium halodurans (strain ATCC BAA-125 / DSM 18197 / FERM 7344 / JCM 9153 / C-125) (Bacillus halodurans) protein is dCTP deaminase, dUMP-forming.